We begin with the raw amino-acid sequence, 258 residues long: MEKVKAKKHLGQHFLNDQQIAQDIVDGLTLHGSYKEVLEIGPGMGVLTQYLLKNNSYHTKVVDIDGESIEYLKKVFPQLKDDVIHGDFLKADLADWYPDKFAIIGNFPYNISTEILFKVLDYREQIPEVVGMFQKEVAERFAAKNGNKTYGITSVLLQAFYDIEYLFTVPEHVFTPPPKVKSGVIRLKRNNRTHLPCDEKEFFKVVKAGFNMRRKTLRNALKSINVQNISMDLPIFDKRAEQLSVQEFFDLTNMLSGK.

The S-adenosyl-L-methionine site is built by histidine 13, leucine 15, glycine 41, aspartate 63, aspartate 87, and asparagine 106.

This sequence belongs to the class I-like SAM-binding methyltransferase superfamily. rRNA adenine N(6)-methyltransferase family. RsmA subfamily.

It is found in the cytoplasm. It carries out the reaction adenosine(1518)/adenosine(1519) in 16S rRNA + 4 S-adenosyl-L-methionine = N(6)-dimethyladenosine(1518)/N(6)-dimethyladenosine(1519) in 16S rRNA + 4 S-adenosyl-L-homocysteine + 4 H(+). Specifically dimethylates two adjacent adenosines (A1518 and A1519) in the loop of a conserved hairpin near the 3'-end of 16S rRNA in the 30S particle. May play a critical role in biogenesis of 30S subunits. In Cytophaga hutchinsonii (strain ATCC 33406 / DSM 1761 / CIP 103989 / NBRC 15051 / NCIMB 9469 / D465), this protein is Ribosomal RNA small subunit methyltransferase A.